A 1136-amino-acid polypeptide reads, in one-letter code: Nuclear pore complex protein Nup133 (1136 aa).

The interval 1–26 (MFSPRGTPGSGRRQAPRTGGRRSVSA) is disordered.

Belongs to the nucleoporin Nup133 family. As to quaternary structure, forms part of the Nup160 subcomplex in the nuclear pore which is composed of NUP160, NUP133, NUP107 and Nup96. This complex plays a role in RNA export and in tethering Nup98 and NUP153 to the nucleus. As to expression, widely expressed in the embryo and in adult tissues. Higher expression is observed in the brain, testes, ovary, skin, and kidney.

Its subcellular location is the nucleus. The protein resides in the nuclear pore complex. It is found in the chromosome. The protein localises to the centromere. It localises to the kinetochore. Involved in poly(A)+ RNA transport. Involved in nephrogenesis. The chain is Nuclear pore complex protein Nup133 from Danio rerio (Zebrafish).